Reading from the N-terminus, the 115-residue chain is MDPLIQELTKEQLRDDMPEFRAGDTVRVHVRVVEGTHERIQIFEGVVIKKRGTGIGATYTVRKIASGVGVERTFPVNTPRVAKVEVIRHGRVRRAKLYYLRTRSGKAARITERRR.

This sequence belongs to the bacterial ribosomal protein bL19 family.

Functionally, this protein is located at the 30S-50S ribosomal subunit interface and may play a role in the structure and function of the aminoacyl-tRNA binding site. In Lactobacillus delbrueckii subsp. bulgaricus (strain ATCC BAA-365 / Lb-18), this protein is Large ribosomal subunit protein bL19.